A 526-amino-acid polypeptide reads, in one-letter code: ATP synthase subunit alpha (526 aa).

ATP is bound at residue 171–178 (GDRQTGKT).

It belongs to the ATPase alpha/beta chains family. In terms of assembly, F-type ATPases have 2 components, CF(1) - the catalytic core - and CF(0) - the membrane proton channel. CF(1) has five subunits: alpha(3), beta(3), gamma(1), delta(1), epsilon(1). CF(0) has four main subunits: a(1), b(1), b'(1) and c(9-12).

The protein localises to the cell inner membrane. The enzyme catalyses ATP + H2O + 4 H(+)(in) = ADP + phosphate + 5 H(+)(out). Functionally, produces ATP from ADP in the presence of a proton gradient across the membrane. The alpha chain is a regulatory subunit. The chain is ATP synthase subunit alpha from Chlorobium phaeobacteroides (strain DSM 266 / SMG 266 / 2430).